Consider the following 177-residue polypeptide: Large ribosomal subunit protein uL6 (177 aa).

It belongs to the universal ribosomal protein uL6 family. As to quaternary structure, part of the 50S ribosomal subunit.

Its function is as follows. This protein binds to the 23S rRNA, and is important in its secondary structure. It is located near the subunit interface in the base of the L7/L12 stalk, and near the tRNA binding site of the peptidyltransferase center. The protein is Large ribosomal subunit protein uL6 of Aromatoleum aromaticum (strain DSM 19018 / LMG 30748 / EbN1) (Azoarcus sp. (strain EbN1)).